Reading from the N-terminus, the 75-residue chain is UPF0154 protein MYPE400 (75 aa).

A helical transmembrane segment spans residues 5–27 (IGLCLGLGIPISLIIGAVIGYYF).

This sequence belongs to the UPF0154 family.

Its subcellular location is the membrane. The polypeptide is UPF0154 protein MYPE400 (Malacoplasma penetrans (strain HF-2) (Mycoplasma penetrans)).